We begin with the raw amino-acid sequence, 325 residues long: MLTTSSSTMLGKYGWQILRRLASKSWEHTRQRKKPSGAGSRVLTDAREVFEFNAWDHVQWDEEQELAAKAAVAKNSTSKMEAEQKERFQTDAPKFWDSFYGIHDNRFFKDRHWLFTEFPELAPLAADSAVLQPRSIFELGCGVGNTILPLLQYSSEPQLKVFGCDFSARAIEILRSQRQFDEKRCEVFVMDATLDHWQVPFEENSQDIIVMIFVLSAIEPKKMQRVLDNCYRYLRPGGLLLFRDYGRYDLAQLRFKSGKCMEDNFYVRGDGTMVYFFTEEELRGMMTQAGLQEEQLIVDRRLQVNRCRGLKMYRVWIQTKFRKPL.

The S-adenosyl-L-methionine site is built by Trp96 and Tyr100. S-adenosyl-L-homocysteine contacts are provided by Tyr100, His112, Glu138, Gly140, Asp165, Asp191, and Ile212. S-adenosyl-L-methionine is bound by residues Gly140, Asp165, Asp191, and Ile212.

It belongs to the methyltransferase superfamily. METL family. In terms of assembly, interacts with Psn. In terms of tissue distribution, widely expressed. Expressed in ovaries, head, thorax and abdomen of adult flies, and in the CNS of third instar larvae. Isoform 2 is predominantly expressed in larvae and in adult tissues that have been tested.

In terms of biological role, probable methyltransferase. This Drosophila melanogaster (Fruit fly) protein is tRNA N(3)-methylcytidine methyltransferase Mettl2.